The primary structure comprises 336 residues: Tetraacyldisaccharide 4'-kinase (336 aa).

60–67 is an ATP binding site; it reads TVGGTGKT.

This sequence belongs to the LpxK family.

The enzyme catalyses a lipid A disaccharide + ATP = a lipid IVA + ADP + H(+). The protein operates within glycolipid biosynthesis; lipid IV(A) biosynthesis; lipid IV(A) from (3R)-3-hydroxytetradecanoyl-[acyl-carrier-protein] and UDP-N-acetyl-alpha-D-glucosamine: step 6/6. Its function is as follows. Transfers the gamma-phosphate of ATP to the 4'-position of a tetraacyldisaccharide 1-phosphate intermediate (termed DS-1-P) to form tetraacyldisaccharide 1,4'-bis-phosphate (lipid IVA). The chain is Tetraacyldisaccharide 4'-kinase from Pseudomonas fluorescens (strain ATCC BAA-477 / NRRL B-23932 / Pf-5).